Consider the following 429-residue polypeptide: Uterine milk protein (429 aa).

Positions methionine 1–cysteine 25 are cleaved as a signal peptide. 2 N-linked (GlcNAc...) asparagine glycosylation sites follow: asparagine 222 and asparagine 268.

Belongs to the serpin family. UTMP subfamily. Post-translationally, glycosylated; carries the so-called mannose 6-phosphate lysosomal recognition marker on its carbohydrate chains. Secreted by ovine endometrium under the influence of progesterone.

The protein is Uterine milk protein of Ovis aries (Sheep).